The chain runs to 545 residues: CTP synthase (545 aa).

The amidoligase domain stretch occupies residues 1–266 (MKTNYIFVTG…DDYICKRFSL (266 aa)). Position 14 (Ser-14) interacts with CTP. Ser-14 serves as a coordination point for UTP. Residues 15–20 (SLGKGI) and Asp-72 contribute to the ATP site. 2 residues coordinate Mg(2+): Asp-72 and Glu-140. CTP-binding positions include 147-149 (DIE), 187-192 (KTKPTQ), and Lys-223. Residues 187 to 192 (KTKPTQ) and Lys-223 each bind UTP. 239-241 (KDV) contacts ATP. The region spanning 291-542 (TIGMVGKYVE…VKAAFDYQKG (252 aa)) is the Glutamine amidotransferase type-1 domain. Residue Gly-352 participates in L-glutamine binding. Catalysis depends on Cys-379, which acts as the Nucleophile; for glutamine hydrolysis. L-glutamine contacts are provided by residues 380–383 (LGMQ), Glu-403, and Arg-470. Catalysis depends on residues His-515 and Glu-517.

This sequence belongs to the CTP synthase family. Homotetramer.

The enzyme catalyses UTP + L-glutamine + ATP + H2O = CTP + L-glutamate + ADP + phosphate + 2 H(+). It carries out the reaction L-glutamine + H2O = L-glutamate + NH4(+). The catalysed reaction is UTP + NH4(+) + ATP = CTP + ADP + phosphate + 2 H(+). The protein operates within pyrimidine metabolism; CTP biosynthesis via de novo pathway; CTP from UDP: step 2/2. With respect to regulation, allosterically activated by GTP, when glutamine is the substrate; GTP has no effect on the reaction when ammonia is the substrate. The allosteric effector GTP functions by stabilizing the protein conformation that binds the tetrahedral intermediate(s) formed during glutamine hydrolysis. Inhibited by the product CTP, via allosteric rather than competitive inhibition. Its function is as follows. Catalyzes the ATP-dependent amination of UTP to CTP with either L-glutamine or ammonia as the source of nitrogen. Regulates intracellular CTP levels through interactions with the four ribonucleotide triphosphates. The sequence is that of CTP synthase from Proteus mirabilis (strain HI4320).